Consider the following 1113-residue polypeptide: Lon protease homolog, mitochondrial (1113 aa).

A mitochondrion-targeting transit peptide spans M1 to R61. The segment at S42–S196 is disordered. Basic and acidic residues-rich tracts occupy residues K64–A99, K124–N143, and D178–L192. In terms of domain architecture, Lon N-terminal spans V204–L456. G609 to T616 provides a ligand contact to ATP. Residues L828–T858 show a composition bias toward basic and acidic residues. Residues L828–V864 are disordered. In terms of domain architecture, Lon proteolytic spans T898 to D1084. Active-site residues include S990 and K1033.

This sequence belongs to the peptidase S16 family. As to quaternary structure, homohexamer or homoheptamer. Organized in a ring with a central cavity.

Its subcellular location is the mitochondrion matrix. The catalysed reaction is Hydrolysis of proteins in presence of ATP.. Functionally, ATP-dependent serine protease that mediates the selective degradation of misfolded, unassembled or oxidatively damaged polypeptides as well as certain short-lived regulatory proteins in the mitochondrial matrix. May also have a chaperone function in the assembly of inner membrane protein complexes. Participates in the regulation of mitochondrial gene expression and in the maintenance of the integrity of the mitochondrial genome. Binds to mitochondrial DNA in a site-specific manner. This chain is Lon protease homolog, mitochondrial (pim1), found in Aspergillus niger (strain ATCC MYA-4892 / CBS 513.88 / FGSC A1513).